The chain runs to 85 residues: Alpha-toxin Ac2 (85 aa).

Residues 1–19 (MNYLVMISLALLFMTGVES) form the signal peptide. An LCN-type CS-alpha/beta domain is found at 21–83 (KDGYIVDDRN…VRTKGPGRCK (63 aa)). Intrachain disulfides connect Cys31/Cys82, Cys35/Cys55, Cys41/Cys65, and Cys45/Cys67. Lys83 bears the Lysine amide mark.

This sequence belongs to the long (4 C-C) scorpion toxin superfamily. Sodium channel inhibitor family. Alpha subfamily. In terms of tissue distribution, expressed by the venom gland.

It localises to the secreted. Its function is as follows. Alpha toxins bind voltage-independently at site-3 of sodium channels (Nav) and inhibit the inactivation of the activated channels, thereby blocking neuronal transmission. This chain is Alpha-toxin Ac2, found in Androctonus crassicauda (Arabian fat-tailed scorpion).